The primary structure comprises 583 residues: MAGERWRAEGLGEGWAIYVTPRAPIREGRRRLATQNGDGSDAPAYETHPSRHGRREVRFSEEPPEVYGDFEPRAAKERSPGERRTPPEKFRSDSAKEEVRESAYNLRSRQRRQRGPQEAEEMKTRRSTRLEQHSQQAQQQLSPATSGRGLRDAQSLSEDRGEDEPSSQPVTSQTVSKKTVRTPETSVMSEDPISNLCRPPLRSPRPDASIVQHINPFEEGETEDDLESSYSDVTIRIRSRDSVESRDEAAVAAGHHPDSLWGLPHSRGDFTAHENQPSLLPTGCQKNPQEWVEQAVRMRTRMAYNNIQKSDFGNQSPSTSRQQAAVQPPDESSVKIKWWLLILVAALAMGIYWFFHTPVVETTAVQEFQNQMKQLQSKYQSQDEKLWKRGTTFLEKHLNSSLPRPQPAILLLTAAQDAAEVLKCLSEQIADAYSSFRSVRAIRIDGAGKAAQDSDLVKHEVDQELTDGFRNGQNAAVVHRFESLPAGSTLIFYKYCDHENAAFKDVALVLTVLLEEQTLEASLGLKEIEEKVRDFLKVKFTSSDTANSYNHMDPDKLNGLWSRISHLVLPVQPENALKAGSCL.

At 1–339 the chain is on the nuclear side; the sequence is MAGERWRAEG…DESSVKIKWW (339 aa). The segment at 23–208 is disordered; that stretch reads APIREGRRRL…PPLRSPRPDA (186 aa). Serine 60 carries the phosphoserine modification. Composition is skewed to basic and acidic residues over residues 70 to 101 and 115 to 132; these read FEPRAAKERSPGERRTPPEKFRSDSAKEEVRE and GPQEAEEMKTRRSTRLEQ. A phosphoserine mark is found at serine 134, serine 142, serine 155, and serine 157. The segment covering 166-188 has biased composition (polar residues); it reads SSQPVTSQTVSKKTVRTPETSVM. Serine 189 bears the Phosphoserine mark. Threonine 222 is modified (phosphothreonine). 3 positions are modified to phosphoserine: serine 228, serine 231, and serine 242. A Glycyl lysine isopeptide (Lys-Gly) (interchain with G-Cter in SUMO2) cross-link involves residue lysine 309. Residue serine 316 is modified to Phosphoserine. The helical transmembrane segment at 340 to 360 threads the bilayer; the sequence is LLILVAALAMGIYWFFHTPVV. The interval 356-583 is interaction with TOR1A; the sequence is HTPVVETTAV…ENALKAGSCL (228 aa). Residues 360-388 are a coiled coil; it reads VETTAVQEFQNQMKQLQSKYQSQDEKLWK. The Perinuclear space portion of the chain corresponds to 361–583; that stretch reads ETTAVQEFQN…ENALKAGSCL (223 aa). Asparagine 399 carries an N-linked (GlcNAc...) asparagine glycan.

Belongs to the TOR1AIP family. As to quaternary structure, interacts with ATP1B4. Interacts with TOR1A (ATP-bound). Interacts with TOR1B, TOR2A and TOR3A. Interacts with VIM.

It localises to the nucleus inner membrane. In terms of biological role, required for nuclear membrane integrity. Induces TOR1A and TOR1B ATPase activity and is required for their location on the nuclear membrane. Binds to A- and B-type lamins. Possible role in membrane attachment and assembly of the nuclear lamina. The sequence is that of Torsin-1A-interacting protein 1 (Tor1aip1) from Rattus norvegicus (Rat).